The following is an 889-amino-acid chain: MSAPKVTPMVRQYLSIKAEHPDSILFFRMGDFYEMFFEDAEKASKALDITLTSRNKNDPDPVPMCGVPHHSANGYVARLVEQGFKVAICDQVQDPSEAKGLVERKVVQVVTPGMQLDGRYLDASQNNFVCAAVTGRGGVGLAFLDISTGAFLVTQVTTPESAFQEILRMGPKELVLPEKFEENARAAAAMRMADQLPTSRLEGKDFENARTRDRLLEHFKTRSLEGFGIQDLPLAVRAAGALLHYVQQAQRQEITHVTKIQAYFQDQFLWIDDNSARNLELLKNIRNGTRQGALISVLDKTVTAMGARLMSYLLRYPLIDPQVINLRLDAVEQAKDLARVRDEVREALKEVHDLERLRSRTALGHANGRDLAAMGESLKQLPRLWALLKENFESPLLCGEATDDGLTDVADLIDRSIREDAPPGVRDGGMIKPGFNEELDEVAALATDVKGLIAGLEAQEKERTGISTLKVRYNKVFGYYIEISKNQTKSIPPHYVRKQTLVNAERYITDELKEFETKVLGAEERRVALEYNIFTQIVDRINGENDRLEKASHLIAWVDVLAALGHVADHNGYCRPVVDMGQTLDLQESRHPVVEKMLPGQRFVPNNIAMNNLDQQILMITGPNMAGKSTVLRQAALCVIMAQMGSFVPAEKAVVGVVDKIFTRVGALDNLSQGESTFMVEMQETANILNNVSHRSLVILDEIGRGTSTFDGLSIAWAVAEYLHDYKDHGVKTMFATHYHELTDLTKTHPRVKNFNIAVNEWNDEIIFLHSLVEGGTNKSYGIQVARLAGIPASVIRRSKQVLQTIEDSEEARVAYSAKASGKSGKKDVQVQMSLFPTPGELAAQALERMDINVMTPLEAMNVLSELQQRVKRPEKAPADVTAETEDQE.

622–629 (GPNMAGKS) lines the ATP pocket. Residues 869–889 (QRVKRPEKAPADVTAETEDQE) are disordered.

The protein belongs to the DNA mismatch repair MutS family.

In terms of biological role, this protein is involved in the repair of mismatches in DNA. It is possible that it carries out the mismatch recognition step. This protein has a weak ATPase activity. This Desulfatibacillum aliphaticivorans protein is DNA mismatch repair protein MutS.